Consider the following 54-residue polypeptide: U-reduvitoxin-Pr7a (54 aa).

The signal sequence occupies residues 1-23 (MDFLRILLFVLACIMALFTSAIA). 3 disulfide bridges follow: Cys-26–Cys-41, Cys-33–Cys-46, and Cys-40–Cys-53.

Belongs to the venom Ptu1-like knottin family. As to expression, expressed by the venom gland.

The protein resides in the secreted. Functionally, binds reversibly and blocks P/Q-type voltage-gated calcium channels (Cav). In Platymeris rhadamanthus (Red spot assassin bug), this protein is U-reduvitoxin-Pr7a.